The sequence spans 267 residues: Cilia- and flagella-associated protein 300 (267 aa).

It belongs to the CFAP300 family. As to quaternary structure, interacts with DNAAF2. As to expression, expressed in the left-right organiser (LRO) node at 8.25 dpc.

The protein localises to the cytoplasm. The protein resides in the cytoskeleton. It is found in the cilium axoneme. In terms of biological role, cilium- and flagellum-specific protein that plays a role in axonemal structure organization and motility. May play a role in outer and inner dynein arm assembly. In Mus musculus (Mouse), this protein is Cilia- and flagella-associated protein 300.